The sequence spans 429 residues: Adenylosuccinate synthetase (429 aa).

GTP contacts are provided by residues 12–18 (GDEGKGK) and 40–42 (GHT). Residue aspartate 13 is the Proton acceptor of the active site. Mg(2+)-binding residues include aspartate 13 and glycine 40. Residues 13-16 (DEGK), 38-41 (NAGH), threonine 128, arginine 142, glutamine 223, threonine 238, and arginine 302 each bind IMP. Histidine 41 functions as the Proton donor in the catalytic mechanism. 298–304 (TTTGRPR) provides a ligand contact to substrate. Residues arginine 304, 330–332 (CID), and 412–414 (SVG) each bind GTP.

This sequence belongs to the adenylosuccinate synthetase family. As to quaternary structure, homodimer. It depends on Mg(2+) as a cofactor.

The protein localises to the cytoplasm. It catalyses the reaction IMP + L-aspartate + GTP = N(6)-(1,2-dicarboxyethyl)-AMP + GDP + phosphate + 2 H(+). It functions in the pathway purine metabolism; AMP biosynthesis via de novo pathway; AMP from IMP: step 1/2. Plays an important role in the de novo pathway of purine nucleotide biosynthesis. Catalyzes the first committed step in the biosynthesis of AMP from IMP. The protein is Adenylosuccinate synthetase of Streptococcus mutans serotype c (strain ATCC 700610 / UA159).